The following is a 586-amino-acid chain: MTNALSWYVAAFVDGLVQAGVTEAVISPGSRSTPLAMAMAAHSGLHFSMHIDERSAAFFALGMVKAKQRPVALVCTSGTAAANYLPAIVEAYYSRVPLVVLTADRPHELRDVGAPQAIDQLHLYGRYAKWFVDLALPEETDPMLSYARTMAARAAAIAAGAPAGPVHVNVPLREPLVPTIDEAVWEKVRTVAETPQIMSGRATLPAENVAALYEQLAAAKRGLIVCGALDQPGFAEAVTELARTLDFPILADPLSQLRAGAHDKTYVIDSYDAILKDEAVASRLVPDVVLRFGAMPVSKPLFLWLKQHRSIRQIVVDDGGWRDPTLEAACFVRSDETVLCRQLLDIARPKQKESAWSTTWREMNDIARTVLRQHLPADEWFEGKVFTELAELLPAGATLFVGNSMPIRDADTFLFATDKPLRVLANRGANGIDGVVSSALGASLAASPLVLVIGDLSFYHDLNGLLAAKMHGLQATIVLMNNNGGGIFSFLPQARHEGPFETLFGTPTDLTFAHAVEMYGGRYAVPHTWGEFRHHVAESLNTGGLSVIEVRTSRTENVQMHRFLWERVSQEIAKFLEQKGTEEPWN.

The protein belongs to the TPP enzyme family. MenD subfamily. As to quaternary structure, homodimer. It depends on Mg(2+) as a cofactor. Mn(2+) serves as cofactor. The cofactor is thiamine diphosphate.

The enzyme catalyses isochorismate + 2-oxoglutarate + H(+) = 5-enolpyruvoyl-6-hydroxy-2-succinyl-cyclohex-3-ene-1-carboxylate + CO2. It participates in quinol/quinone metabolism; 1,4-dihydroxy-2-naphthoate biosynthesis; 1,4-dihydroxy-2-naphthoate from chorismate: step 2/7. The protein operates within quinol/quinone metabolism; menaquinone biosynthesis. Its function is as follows. Catalyzes the thiamine diphosphate-dependent decarboxylation of 2-oxoglutarate and the subsequent addition of the resulting succinic semialdehyde-thiamine pyrophosphate anion to isochorismate to yield 2-succinyl-5-enolpyruvyl-6-hydroxy-3-cyclohexene-1-carboxylate (SEPHCHC). In Geobacillus thermodenitrificans (strain NG80-2), this protein is 2-succinyl-5-enolpyruvyl-6-hydroxy-3-cyclohexene-1-carboxylate synthase.